The chain runs to 353 residues: Alcohol dehydrogenase 1 (353 aa).

Zn(2+)-binding residues include C47, H70, C101, C104, C107, C115, and C157. NAD(+) contacts are provided by residues 181–187 (GAGGGLG), D205, K210, 274–276 (IGL), and R346.

The protein belongs to the zinc-containing alcohol dehydrogenase family. Homotetramer. The cofactor is Zn(2+).

The protein localises to the cytoplasm. The catalysed reaction is a primary alcohol + NAD(+) = an aldehyde + NADH + H(+). The enzyme catalyses a secondary alcohol + NAD(+) = a ketone + NADH + H(+). This Neurospora crassa (strain ATCC 24698 / 74-OR23-1A / CBS 708.71 / DSM 1257 / FGSC 987) protein is Alcohol dehydrogenase 1 (adh-1).